The primary structure comprises 343 residues: Heme A synthase (343 aa).

8 helical membrane passes run 13-33, 96-116, 130-150, 165-185, 197-217, 258-278, 290-310, and 311-331; these read VALW…VGGA, HRLL…FFLI, VLLG…SSGL, LGLA…AWAG, GWAL…ALVA, LHHR…GVAA, LTAF…IWTL, and MTAV…ILLA. Position 260 (histidine 260) interacts with heme. A heme-binding site is contributed by histidine 322.

The protein belongs to the COX15/CtaA family. Type 2 subfamily. In terms of assembly, interacts with CtaB. It depends on heme b as a cofactor.

It localises to the cell membrane. The enzyme catalyses Fe(II)-heme o + 2 A + H2O = Fe(II)-heme a + 2 AH2. It participates in porphyrin-containing compound metabolism; heme A biosynthesis; heme A from heme O: step 1/1. Catalyzes the conversion of heme O to heme A by two successive hydroxylations of the methyl group at C8. The first hydroxylation forms heme I, the second hydroxylation results in an unstable dihydroxymethyl group, which spontaneously dehydrates, resulting in the formyl group of heme A. The polypeptide is Heme A synthase (Caulobacter sp. (strain K31)).